We begin with the raw amino-acid sequence, 35 residues long: Photosystem II reaction center protein T (35 aa).

A helical transmembrane segment spans residues 3–23; sequence ALVYTFLLVSTLGIIFFAIFF.

Belongs to the PsbT family. PSII is composed of 1 copy each of membrane proteins PsbA, PsbB, PsbC, PsbD, PsbE, PsbF, PsbH, PsbI, PsbJ, PsbK, PsbL, PsbM, PsbT, PsbY, PsbZ, Psb30/Ycf12, at least 3 peripheral proteins of the oxygen-evolving complex and a large number of cofactors. It forms dimeric complexes.

Its subcellular location is the plastid. The protein resides in the chloroplast thylakoid membrane. In terms of biological role, found at the monomer-monomer interface of the photosystem II (PS II) dimer, plays a role in assembly and dimerization of PSII. PSII is a light-driven water plastoquinone oxidoreductase, using light energy to abstract electrons from H(2)O, generating a proton gradient subsequently used for ATP formation. The chain is Photosystem II reaction center protein T from Pisum sativum (Garden pea).